The primary structure comprises 334 residues: Replication factor C subunit 4 (334 aa).

ATP is bound at residue 55–62 (GPPGTGKT).

The protein belongs to the activator 1 small subunits family. In terms of assembly, heteropentamer of various rfc subunits that forms a complex (RFC) with PCNA in the presence of ATP.

The protein localises to the nucleus. The elongation of primed DNA templates by DNA polymerase delta and epsilon requires the action of the accessory proteins PCNA and activator 1. This subunit may be involved in the elongation of the multiprimed DNA template. The chain is Replication factor C subunit 4 (rfc-4) from Caenorhabditis elegans.